Reading from the N-terminus, the 116-residue chain is Iron-sulfur cluster insertion protein ErpA (116 aa).

Iron-sulfur cluster is bound by residues cysteine 44, cysteine 108, and cysteine 110.

The protein belongs to the HesB/IscA family. Homodimer. Iron-sulfur cluster is required as a cofactor.

Its function is as follows. Required for insertion of 4Fe-4S clusters for at least IspG. The polypeptide is Iron-sulfur cluster insertion protein ErpA (Nitrosococcus oceani (strain ATCC 19707 / BCRC 17464 / JCM 30415 / NCIMB 11848 / C-107)).